The following is a 160-amino-acid chain: Cyclic pyranopterin monophosphate synthase (160 aa).

Substrate is bound by residues 75-77 and 115-116; these read MCH and ME. The active site involves Asp130.

It belongs to the MoaC family. Homohexamer; trimer of dimers.

The catalysed reaction is (8S)-3',8-cyclo-7,8-dihydroguanosine 5'-triphosphate = cyclic pyranopterin phosphate + diphosphate. It participates in cofactor biosynthesis; molybdopterin biosynthesis. Its function is as follows. Catalyzes the conversion of (8S)-3',8-cyclo-7,8-dihydroguanosine 5'-triphosphate to cyclic pyranopterin monophosphate (cPMP). This is Cyclic pyranopterin monophosphate synthase from Lysinibacillus sphaericus (strain C3-41).